A 244-amino-acid chain; its full sequence is Large ribosomal subunit protein uL30 (244 aa).

Residues 1-37 (MAPTKKVPQVPETVLKRRKQRADARTKAAQHKVTVAA) form a disordered region.

This sequence belongs to the universal ribosomal protein uL30 family.

In terms of biological role, binds to G-rich structures in 28S rRNA and in mRNAs. Plays a regulatory role in the translation apparatus; inhibits cell-free translation of mRNAs. This is Large ribosomal subunit protein uL30 (rpl-7) from Caenorhabditis elegans.